The following is a 281-amino-acid chain: 40S small subunit processome assembly factor 1 (281 aa).

Positions 29 to 141 (LGETEGETEQ…DEDEPAKNKT (113 aa)) are disordered. Ser-67 and Ser-75 each carry phosphoserine. Lys-172 is subject to N6-acetyllysine. The segment at 221-254 (ETDIFKKKKKKGRGQEDRRSKKSAPSILSSGQVG) is disordered. Residue Ser-267 is modified to Phosphoserine.

As to quaternary structure, part of the small subunit (SSU) processome, composed of more than 70 proteins and the RNA chaperone small nucleolar RNA (snoRNA) U3.

Its subcellular location is the chromosome. It is found in the nucleus. The protein localises to the nucleolus. Part of the small subunit (SSU) processome, first precursor of the small eukaryotic ribosomal subunit. During the assembly of the SSU processome in the nucleolus, many ribosome biogenesis factors, an RNA chaperone and ribosomal proteins associate with the nascent pre-rRNA and work in concert to generate RNA folding, modifications, rearrangements and cleavage as well as targeted degradation of pre-ribosomal RNA by the RNA exosome. Prevents helicase DHX37 to be recruited before post-A1 state. The protein is 40S small subunit processome assembly factor 1 of Mus musculus (Mouse).